A 547-amino-acid polypeptide reads, in one-letter code: Chaperonin GroEL (547 aa).

Residues threonine 30–proline 33, lysine 51, aspartate 87–threonine 91, glycine 415, and aspartate 495 contribute to the ATP site.

Belongs to the chaperonin (HSP60) family. As to quaternary structure, forms a cylinder of 14 subunits composed of two heptameric rings stacked back-to-back. Interacts with the co-chaperonin GroES.

The protein resides in the cytoplasm. The enzyme catalyses ATP + H2O + a folded polypeptide = ADP + phosphate + an unfolded polypeptide.. Its function is as follows. Together with its co-chaperonin GroES, plays an essential role in assisting protein folding. The GroEL-GroES system forms a nano-cage that allows encapsulation of the non-native substrate proteins and provides a physical environment optimized to promote and accelerate protein folding. The chain is Chaperonin GroEL from Aggregatibacter actinomycetemcomitans (Actinobacillus actinomycetemcomitans).